The following is a 115-amino-acid chain: T cell receptor delta variable 1 (115 aa).

The N-terminal stretch at 1 to 21 (MLFSSLLCVFVAFSYSGSSVA) is a signal peptide. The region spanning 22–115 (QKVTQAQSSV…SAKYFCALGE (94 aa)) is the Ig-like domain. C43 and C111 are oxidised to a cystine.

Gamma-delta TR is a heterodimer composed of a gamma and delta chain; disulfide-linked. The gamma-delta TR is associated with the transmembrane signaling CD3 coreceptor proteins following the stoichiometry: a single gamma-delta TR heterodimer associates with one CD3D-CD3E heterodimer, one CD3G-CD3E heterodimer and one CD247 homodimer forming a stable octameric structure. Upon activation, gamma-delta TR complex associates with FCER1G to initiate intracellular signaling.

The protein resides in the cell membrane. V region of the variable domain of T cell receptor (TR) delta chain that participates in the antigen recognition. Gamma-delta TRs recognize a variety of self and foreign non-peptide antigens frequently expressed at the epithelial boundaries between the host and external environment, including endogenous lipids presented by MH-like protein CD1D and phosphoantigens presented by butyrophilin-like molecule BTN3A1. Upon antigen recognition induces rapid, innate-like immune responses involved in pathogen clearance and tissue repair. Binding of gamma-delta TR complex to antigen triggers phosphorylation of immunoreceptor tyrosine-based activation motifs (ITAMs) in the CD3 chains by the LCK and FYN kinases, allowing the recruitment, phosphorylation, and activation of ZAP70 that facilitates phosphorylation of the scaffolding proteins LCP2 and LAT. This lead to the formation of a supramolecular signalosome that recruits the phospholipase PLCG1, resulting in calcium mobilization and ERK activation, ultimately leading to T cell expansion and differentiation into effector cells. Gamma-delta TRs are produced through somatic rearrangement of a limited repertoire of variable (V), diversity (D), and joining (J) genes. The potential diversity of gamma-delta TRs is conferred by the unique ability to rearrange (D) genes in tandem and to utilize all three reading frames. The combinatorial diversity is considerably increased by the sequence exonuclease trimming and random nucleotide (N) region additions which occur during the V-(D)-J rearrangements. The chain is T cell receptor delta variable 1 from Homo sapiens (Human).